A 635-amino-acid polypeptide reads, in one-letter code: Dual specificity protein kinase zak2 (635 aa).

2 consecutive Protein kinase domains span residues 9–249 (WEEI…HRLI) and 299–585 (NKDD…QIYF). Residues 15-23 (IGSCNSKSR) and lysine 45 each bind ATP. The Proton acceptor role is filled by aspartate 124. Residues 305-313 (GGDGFFSVV) and lysine 326 contribute to the ATP site. The Proton acceptor role is filled by aspartate 427.

The protein in the N-terminal section; belongs to the protein kinase superfamily. Ser/Thr protein kinase family. This sequence in the C-terminal section; belongs to the protein kinase superfamily. TKL Tyr protein kinase family. C-terminal tyrosine kinase domain is capable of autophosphorylation, in vitro. In terms of tissue distribution, zakA and zak2 are coexpressed in prestalk cell population, zakA is enriched in pstB populations and zak1 in pstA populations. ZakA and zak2 are coexpressed in prespore cells, zakA expression levels are 10 fold higher than zak2.

It catalyses the reaction L-seryl-[protein] + ATP = O-phospho-L-seryl-[protein] + ADP + H(+). The enzyme catalyses L-threonyl-[protein] + ATP = O-phospho-L-threonyl-[protein] + ADP + H(+). The catalysed reaction is L-tyrosyl-[protein] + ATP = O-phospho-L-tyrosyl-[protein] + ADP + H(+). Its function is as follows. Positive regulator of gsk3/gskA activity required for cell pattern formation and a downstream effector of carC. The kinases, gsk3/gskA, zakA and zak2, form part of a signaling pathway that responds to extracellular cyclic AMP. The pathway has a role in transcriptional regulation; required to direct prespore/spore fates during development. Zak2 negatively regulates prestalk differentiation by regulating expression of ecmA. Phosphorylates Y-214 of gsk3/gskA, in vitro. The chain is Dual specificity protein kinase zak2 (zak2) from Dictyostelium discoideum (Social amoeba).